Here is a 1680-residue protein sequence, read N- to C-terminus: Sodium channel protein type 7 subunit alpha (1680 aa).

Residues 1 to 117 (MLTSPEPKGL…RRAVIKVLVH (117 aa)) lie on the Cytoplasmic side of the membrane. Residues 100 to 401 (TLSPLSSLRR…ILTMAYEQEK (302 aa)) form an I repeat. The chain crosses the membrane as a helical span at residues 118 to 137 (PLFRLLILISVLTDSILMCM). Residues 138-141 (SNLP) are Extracellular-facing. A helical membrane pass occupies residues 142–167 (EWILAVENTLLGIYTFEILVKVIARG). Over 168–178 (IWAGSFSFLGD) the chain is Cytoplasmic. A helical membrane pass occupies residues 179–196 (LWNWLDFSVTLFELITRS). The Extracellular portion of the chain corresponds to 197–200 (SPLS). A helical membrane pass occupies residues 201–219 (SLPMFKTIRTLRILKIIPL). The Cytoplasmic portion of the chain corresponds to 220 to 237 (NHGLQSIVVTLVQCLKKL). A helical transmembrane segment spans residues 238-259 (LGAIALALFFLTVSSLFGMGLF). Residues 260 to 338 (MGNLKHKCVR…PDNGFTSFDN (79 aa)) lie on the Extracellular side of the membrane. Cysteines 267 and 307 form a disulfide. N-linked (GlcNAc...) asparagine glycosylation is found at asparagine 281 and asparagine 309. Positions 339–366 (FGWALLAMFRLMTQDYPELLYHQILYAS) form an intramembrane region, pore-forming. Glycine 367 is a topological domain (extracellular). A helical membrane pass occupies residues 368 to 407 (KIYMIFFVLISFWFAFYMASLFLGILTMAYEQEKQRASEE). The Cytoplasmic portion of the chain corresponds to 408-505 (SRDMDSKCHQ…EFADRIITHP (98 aa)). The stretch at 487–756 (CSPCWIKLNE…QLAVAWIKMV (270 aa)) is one II repeat. A helical membrane pass occupies residues 506-521 (LFDLFLVICIILNICF). Over 522-530 (LALEHFPMS) the chain is Extracellular. The chain crosses the membrane as a helical span at residues 531-559 (EELMSLLAIGNLVFIGIYTIEMILKIIAM). The Cytoplasmic portion of the chain corresponds to 560 to 568 (HPYGYFQIS). A helical membrane pass occupies residues 569 to 586 (WHIFDSILVVLGLTEMLL). The Extracellular segment spans residues 587–592 (ADIEEI). Residues 593 to 608 (TVFILVPLIFIKLGKY) traverse the membrane as a helical segment. Over 609–625 (APPFKNLMRILGRALVA) the chain is Cytoplasmic. The chain crosses the membrane as a helical span at residues 626 to 654 (LKDLVLLVSIFIYFSAVFGMKLFGRSYKD). At 655–672 (CVCHVDQDCQRQRWHMSD) the chain is on the extracellular side. Intrachain disulfides connect cysteine 657–cysteine 663 and cysteine 695–cysteine 704. The segment at residues 673–699 (FLHAYVTVFRILCGEWIETLWECMEVA) is an intramembrane region (pore-forming). Residue glycine 700 is a topological domain, extracellular. The helical transmembrane segment at 701–731 (EAWCIPFYMMVILIGNLLILYLFVALVSSFA) threads the bilayer. At 732 to 933 (SYDATTEVSK…KTCCKIVENS (202 aa)) the chain is on the cytoplasmic side. The span at 807 to 833 (DQSSGTEKTPVTESESQSLIASPSVSE) shows a compositional bias: polar residues. The disordered stretch occupies residues 807-874 (DQSSGTEKTP…MKQSSSSECS (68 aa)). Serine 842 carries the post-translational modification Phosphoserine. One copy of the III repeat lies at 915–1223 (NGKIWRNIRK…KKQYRALKKL (309 aa)). Residues 934-952 (WFECFIGLVTLLCTGTLAL) traverse the membrane as a helical segment. The Extracellular portion of the chain corresponds to 953 to 960 (EDIYIDQR). A helical transmembrane segment spans residues 961-989 (KTIKIFLEYGDMIFAYIFILEMLLKWVAY). Over 990–997 (GFKAYFSN) the chain is Cytoplasmic. Residues 998-1019 (NWYKLDFMVVIVLCLSLIGKTR) form a helical membrane-spanning segment. Position 1020 (glutamate 1020) is a topological domain, extracellular. Residues 1021–1039 (DLNPLASIKFLRALRVLSQ) traverse the membrane as a helical segment. Topologically, residues 1040–1054 (FERMKVVLRALIKTT) are cytoplasmic. The helical transmembrane segment at 1055–1079 (LPAVSVFLVCLMIWLLFSVMGVFLF) threads the bilayer. Residues 1080–1126 (AGKFYECIDPTRGERFSVFEVMNKSQCENLVFNESMPWENAKLNFDN) lie on the Extracellular side of the membrane. Cysteines 1086 and 1106 form a disulfide. N-linked (GlcNAc...) asparagine glycosylation is found at asparagine 1102 and asparagine 1112. Residues 1127 to 1153 (VGNGFLSLFQVATFNGWISIMNSAIDS) constitute an intramembrane region (pore-forming). Topologically, residues 1154 to 1166 (VGVYMQPSFEHSL) are extracellular. A helical transmembrane segment spans residues 1167 to 1201 (HMYTYFIIFVVFGLFLPLCMLIGVIIRNFNKQKIK). The Cytoplasmic portion of the chain corresponds to 1202 to 1249 (QGGSNIFITVKQKKQYRALKKLLYADSQKPAARPRNKFQGFICDVVTH). The IV repeat unit spans residues 1232–1530 (AARPRNKFQG…WNRFDPDRTQ (299 aa)). The helical transmembrane segment at 1250 to 1271 (RVFNVIIILLICFQATTIMIQN) threads the bilayer. Over 1272-1275 (DEQS) the chain is Extracellular. A helical membrane pass occupies residues 1276-1304 (PQIETAVFWMNSLFTMLFTLECILKLTAF). Residues 1305–1311 (RCHYFTS) lie on the Cytoplasmic side of the membrane. A helical transmembrane segment spans residues 1312–1337 (AWNVHDFMVVVFSITGLLLPLSIGQY). The Extracellular segment spans residues 1338-1340 (FVP). The chain crosses the membrane as a helical span at residues 1341 to 1361 (PSLVQLLLLSRIIHVLRPGKG). The Cytoplasmic segment spans residues 1362-1376 (PKVFHDLMLPLMLSL). A helical membrane pass occupies residues 1377–1401 (PALLNIALLIFLVMFIYAIFGMYNF). Residues 1402–1419 (AYVKKEAGINDVSNFETF) are Extracellular-facing. An intramembrane region (pore-forming) is located at residues 1420 to 1443 (GSSMLCLFQVTTFSGWDGMLDAIF). At 1444-1467 (NSQWSDCDPDKINPGTQVRGDCGS) the chain is on the extracellular side. Cysteines 1450 and 1465 form a disulfide. Residues 1468–1503 (PSVGIFYFVSYILISWLIIVNMYVVLIMEFLSIPSK) traverse the membrane as a helical segment. Residues 1504–1680 (RKNRTLSEDD…EEKASIQTQI (177 aa)) lie on the Cytoplasmic side of the membrane. The tract at residues 1646–1680 (KIQDIPEIDDGREDPNSKGVHSGQIEEKASIQTQI) is disordered.

It belongs to the sodium channel (TC 1.A.1.10) family. SCN7A subfamily. In terms of assembly, the sodium channel formed by SCN7A is probably a heterooligomeric complex consisting of the ion conducting pore forming alpha subunit SCN7A and regulatory beta subunits such as SCN3B. Interacts with ATP1A1; activates ATP1A1 and thereby indirectly signals to nearby neurons to regulate sodium homeostasis. As to expression, not tissue specific but widely expressed.

It is found in the cell membrane. It carries out the reaction Na(+)(in) = Na(+)(out). Functionally, sodium leak channel functioning as an osmosensor regulating sodium ion levels in various tissues and organs. While most sodium channels are voltage-gated, SCN7A is not and lets sodium flow through membrane along its concentration gradient. In glial cells of the central nervous system, senses body-fluid sodium levels and controls salt intake behavior as well as voluntary water intake through activation of nearby neurons to maintain appropriate sodium levels in the body. By mediating sodium influx into keratinocytes, also plays a role in skin barrier homeostasis. In Rattus norvegicus (Rat), this protein is Sodium channel protein type 7 subunit alpha.